The primary structure comprises 310 residues: Ribosomal RNA small subunit methyltransferase H (310 aa).

S-adenosyl-L-methionine contacts are provided by residues 32 to 34, Asp-52, Phe-79, Asp-100, and Gln-107; that span reads AGH.

Belongs to the methyltransferase superfamily. RsmH family.

It localises to the cytoplasm. It catalyses the reaction cytidine(1402) in 16S rRNA + S-adenosyl-L-methionine = N(4)-methylcytidine(1402) in 16S rRNA + S-adenosyl-L-homocysteine + H(+). In terms of biological role, specifically methylates the N4 position of cytidine in position 1402 (C1402) of 16S rRNA. The polypeptide is Ribosomal RNA small subunit methyltransferase H (Bacillus pumilus (strain SAFR-032)).